The chain runs to 147 residues: Hemoglobin subunit gamma (147 aa).

The Globin domain maps to 3 to 147 (NFTAEDKAAI…VASALGSRYH (145 aa)). Positions 64 and 93 each coordinate heme b.

It belongs to the globin family. As to quaternary structure, heterotetramer of two alpha chains and two gamma chains in fetal hemoglobin (Hb F). In terms of tissue distribution, red blood cells.

Gamma chains make up the fetal hemoglobin F, in combination with alpha chains. The protein is Hemoglobin subunit gamma (HBG) of Aotus azarae (Azara's night monkey).